Consider the following 377-residue polypeptide: Pyruvate dehydrogenase E1 component subunit alpha, mitochondrial (377 aa).

The transit peptide at 1–26 (MLSNFLKVNSKALGHIRTFASKSGEI) directs the protein to the mitochondrion. Residues histidine 83, tyrosine 109, arginine 110, glycine 156, valine 158, aspartate 187, glycine 188, alanine 189, asparagine 216, and tyrosine 218 each coordinate pyruvate. Thiamine diphosphate is bound by residues tyrosine 109, arginine 110, glycine 156, valine 158, aspartate 187, glycine 188, alanine 189, and asparagine 216. A Mg(2+)-binding site is contributed by aspartate 187. 2 residues coordinate Mg(2+): asparagine 216 and tyrosine 218. Position 283 (histidine 283) interacts with thiamine diphosphate.

Tetramer of 2 alpha and 2 beta subunits. The cofactor is thiamine diphosphate. Mg(2+) is required as a cofactor.

The protein localises to the mitochondrion matrix. It catalyses the reaction N(6)-[(R)-lipoyl]-L-lysyl-[protein] + pyruvate + H(+) = N(6)-[(R)-S(8)-acetyldihydrolipoyl]-L-lysyl-[protein] + CO2. E1 activity is regulated by phosphorylation (inactivation) and dephosphorylation (activation) of the alpha subunit. The pyruvate dehydrogenase complex catalyzes the overall conversion of pyruvate to acetyl-CoA and CO(2). It contains multiple copies of three enzymatic components: pyruvate dehydrogenase (E1), dihydrolipoamide acetyltransferase (E2) and lipoamide dehydrogenase (E3). This is Pyruvate dehydrogenase E1 component subunit alpha, mitochondrial (pdhA) from Dictyostelium discoideum (Social amoeba).